A 280-amino-acid chain; its full sequence is Ribosomal protein L11 methyltransferase (280 aa).

4 residues coordinate S-adenosyl-L-methionine: T131, G152, D174, and N217.

Belongs to the methyltransferase superfamily. PrmA family.

Its subcellular location is the cytoplasm. The enzyme catalyses L-lysyl-[protein] + 3 S-adenosyl-L-methionine = N(6),N(6),N(6)-trimethyl-L-lysyl-[protein] + 3 S-adenosyl-L-homocysteine + 3 H(+). Functionally, methylates ribosomal protein L11. This chain is Ribosomal protein L11 methyltransferase, found in Bacteroides thetaiotaomicron (strain ATCC 29148 / DSM 2079 / JCM 5827 / CCUG 10774 / NCTC 10582 / VPI-5482 / E50).